The sequence spans 559 residues: Dihydroxy-acid dehydratase (559 aa).

Asp-78 lines the Mg(2+) pocket. Cys-119 contributes to the [2Fe-2S] cluster binding site. Mg(2+) contacts are provided by Asp-120 and Lys-121. Residue Lys-121 is modified to N6-carboxylysine. Cys-192 is a [2Fe-2S] cluster binding site. A Mg(2+)-binding site is contributed by Glu-446. The Proton acceptor role is filled by Ser-472.

This sequence belongs to the IlvD/Edd family. Homodimer. [2Fe-2S] cluster serves as cofactor. It depends on Mg(2+) as a cofactor.

The catalysed reaction is (2R)-2,3-dihydroxy-3-methylbutanoate = 3-methyl-2-oxobutanoate + H2O. It catalyses the reaction (2R,3R)-2,3-dihydroxy-3-methylpentanoate = (S)-3-methyl-2-oxopentanoate + H2O. The protein operates within amino-acid biosynthesis; L-isoleucine biosynthesis; L-isoleucine from 2-oxobutanoate: step 3/4. It functions in the pathway amino-acid biosynthesis; L-valine biosynthesis; L-valine from pyruvate: step 3/4. Functionally, functions in the biosynthesis of branched-chain amino acids. Catalyzes the dehydration of (2R,3R)-2,3-dihydroxy-3-methylpentanoate (2,3-dihydroxy-3-methylvalerate) into 2-oxo-3-methylpentanoate (2-oxo-3-methylvalerate) and of (2R)-2,3-dihydroxy-3-methylbutanoate (2,3-dihydroxyisovalerate) into 2-oxo-3-methylbutanoate (2-oxoisovalerate), the penultimate precursor to L-isoleucine and L-valine, respectively. This chain is Dihydroxy-acid dehydratase, found in Wolinella succinogenes (strain ATCC 29543 / DSM 1740 / CCUG 13145 / JCM 31913 / LMG 7466 / NCTC 11488 / FDC 602W) (Vibrio succinogenes).